The sequence spans 115 residues: MKFVLLFGVLLVTLFSYSSAEMFDDFDQADEDELLSLIEKEEARAKECTPRFYDCSHDRHSCCRSELFKDVCTCFYPEGGDNEVCTCQQPKHLKYMEKAAGKAKKFGGKVKKWFG.

Residues 1–20 form the signal peptide; it reads MKFVLLFGVLLVTLFSYSSA. Residues 21–44 constitute a propeptide that is removed on maturation; the sequence is EMFDDFDQADEDELLSLIEKEEAR. 4 disulfides stabilise this stretch: C48-C63, C55-C72, C62-C87, and C74-C85.

It belongs to the neurotoxin 19 (CSTX) family. 01 subfamily. In terms of tissue distribution, expressed by the venom gland.

It localises to the secreted. This chain is U3-lycotoxin-Ls1q, found in Lycosa singoriensis (Wolf spider).